Consider the following 180-residue polypeptide: Small ribosomal subunit protein uS5 (180 aa).

An S5 DRBM domain is found at 24–87; it reads MIEKLVAVNR…EQARKNLVSV (64 aa).

This sequence belongs to the universal ribosomal protein uS5 family. As to quaternary structure, part of the 30S ribosomal subunit. Contacts proteins S4 and S8.

With S4 and S12 plays an important role in translational accuracy. Functionally, located at the back of the 30S subunit body where it stabilizes the conformation of the head with respect to the body. This is Small ribosomal subunit protein uS5 from Stenotrophomonas maltophilia (strain R551-3).